The chain runs to 443 residues: Probable 26S proteasome regulatory subunit 4 (443 aa).

A disordered region spans residues 1 to 53 (MGQQQSGFGGRGNDRGAGDGEKKEKKKYEAPIPSRIGKKKKGSKGPDAASKLP). The segment covering 12 to 29 (GNDRGAGDGEKKEKKKYE) has biased composition (basic and acidic residues). An ATP-binding site is contributed by 229–236 (GCPGTGKT).

The protein belongs to the AAA ATPase family.

It is found in the cytoplasm. The protein resides in the nucleus. Functionally, the 26S proteasome is involved in the ATP-dependent degradation of ubiquitinated proteins. The regulatory (or ATPase) complex confers ATP dependency and substrate specificity to the 26S complex. May play a role in the degradation of microtubule severing protein mei-1. The polypeptide is Probable 26S proteasome regulatory subunit 4 (rpt-2) (Caenorhabditis elegans).